Here is a 369-residue protein sequence, read N- to C-terminus: sn-glycerol-3-phosphate import ATP-binding protein UgpC (369 aa).

The 232-residue stretch at 4-235 (LSLRNVQKTY…PASTFVAGFI (232 aa)) folds into the ABC transporter domain. Residue 37–44 (GPSGCGKS) participates in ATP binding.

It belongs to the ABC transporter superfamily. sn-glycerol-3-phosphate importer (TC 3.A.1.1.3) family. In terms of assembly, the complex is composed of two ATP-binding proteins (UgpC), two transmembrane proteins (UgpA and UgpE) and a solute-binding protein (UgpB).

It localises to the cell inner membrane. It catalyses the reaction sn-glycerol 3-phosphate(out) + ATP + H2O = sn-glycerol 3-phosphate(in) + ADP + phosphate + H(+). In terms of biological role, part of the ABC transporter complex UgpBAEC involved in sn-glycerol-3-phosphate (G3P) import. Responsible for energy coupling to the transport system. The protein is sn-glycerol-3-phosphate import ATP-binding protein UgpC of Cupriavidus pinatubonensis (strain JMP 134 / LMG 1197) (Cupriavidus necator (strain JMP 134)).